Here is a 44-residue protein sequence, read N- to C-terminus: Small, acid-soluble spore protein N (44 aa).

The disordered stretch occupies residues 1 to 44; it reads MGNPKKNSKDFVPNHIGTQSKKAGGNKGKQMQDTTGKQPIVDNG.

It belongs to the SspN family.

It localises to the spore core. In Bacillus cytotoxicus (strain DSM 22905 / CIP 110041 / 391-98 / NVH 391-98), this protein is Small, acid-soluble spore protein N.